The sequence spans 483 residues: Probable glycine dehydrogenase (decarboxylating) subunit 2 (483 aa).

The interval 1 to 24 is disordered; sequence MLIFDHSRPGRTAAAQLPATGGDL. Lysine 264 bears the N6-(pyridoxal phosphate)lysine mark.

The protein belongs to the GcvP family. C-terminal subunit subfamily. As to quaternary structure, the glycine cleavage system is composed of four proteins: P, T, L and H. In this organism, the P 'protein' is a heterodimer of two subunits. Requires pyridoxal 5'-phosphate as cofactor.

The enzyme catalyses N(6)-[(R)-lipoyl]-L-lysyl-[glycine-cleavage complex H protein] + glycine + H(+) = N(6)-[(R)-S(8)-aminomethyldihydrolipoyl]-L-lysyl-[glycine-cleavage complex H protein] + CO2. The glycine cleavage system catalyzes the degradation of glycine. The P protein binds the alpha-amino group of glycine through its pyridoxal phosphate cofactor; CO(2) is released and the remaining methylamine moiety is then transferred to the lipoamide cofactor of the H protein. In Thiobacillus denitrificans (strain ATCC 25259 / T1), this protein is Probable glycine dehydrogenase (decarboxylating) subunit 2.